Reading from the N-terminus, the 351-residue chain is Dihydroorotate dehydrogenase (quinone) (351 aa).

FMN is bound by residues 61-65 (AGLDK) and Thr-85. Lys-65 contributes to the substrate binding site. 110–114 (NRMGF) serves as a coordination point for substrate. Positions 139 and 172 each coordinate FMN. Asn-172 serves as a coordination point for substrate. Catalysis depends on Ser-175, which acts as the Nucleophile. Substrate is bound at residue Asn-177. Positions 217 and 245 each coordinate FMN. 246–247 (NT) serves as a coordination point for substrate. FMN contacts are provided by residues Gly-268, Gly-297, and 318 to 319 (YT).

Belongs to the dihydroorotate dehydrogenase family. Type 2 subfamily. Monomer. The cofactor is FMN.

Its subcellular location is the cell membrane. The enzyme catalyses (S)-dihydroorotate + a quinone = orotate + a quinol. The protein operates within pyrimidine metabolism; UMP biosynthesis via de novo pathway; orotate from (S)-dihydroorotate (quinone route): step 1/1. Its function is as follows. Catalyzes the conversion of dihydroorotate to orotate with quinone as electron acceptor. The sequence is that of Dihydroorotate dehydrogenase (quinone) from Xylella fastidiosa (strain 9a5c).